The following is a 267-amino-acid chain: tRNA pseudouridine synthase A (267 aa).

Asp-52 functions as the Nucleophile in the catalytic mechanism. A substrate-binding site is contributed by Tyr-110.

It belongs to the tRNA pseudouridine synthase TruA family. As to quaternary structure, homodimer.

It carries out the reaction uridine(38/39/40) in tRNA = pseudouridine(38/39/40) in tRNA. Functionally, formation of pseudouridine at positions 38, 39 and 40 in the anticodon stem and loop of transfer RNAs. This is tRNA pseudouridine synthase A from Paraburkholderia phymatum (strain DSM 17167 / CIP 108236 / LMG 21445 / STM815) (Burkholderia phymatum).